Consider the following 323-residue polypeptide: Cytochrome c biogenesis protein CcsA (323 aa).

8 helical membrane passes run 17–37 (VVSIVISIHLITLFVNQIVGF), 44–64 (GMIITFLCITGLLITRWFFSG), 68–88 (FSDLYESLIFLSWGFSIFYMV), 98–118 (LSTIIAPSVIFTQGFATSGLL), 143–163 (MILGYAALLCGSLLSVAILVI), 229–249 (IISLGFIFLTIGILSGAVWAN), 262–279 (ETWAFITWTIFAIYLHSR), and 291–311 (IVASIGFLIIWICYFGVNLLG).

It belongs to the CcmF/CycK/Ccl1/NrfE/CcsA family. May interact with Ccs1.

The protein localises to the plastid. The protein resides in the chloroplast thylakoid membrane. In terms of biological role, required during biogenesis of c-type cytochromes (cytochrome c6 and cytochrome f) at the step of heme attachment. This is Cytochrome c biogenesis protein CcsA from Lotus japonicus (Lotus corniculatus var. japonicus).